The primary structure comprises 342 residues: Dihydroorotate dehydrogenase (quinone) (342 aa).

FMN-binding positions include 61-65 (AGLDK) and threonine 85. Lysine 65 is a binding site for substrate. 110 to 114 (NRMGF) is a binding site for substrate. FMN is bound by residues asparagine 138 and asparagine 171. Asparagine 171 contacts substrate. The Nucleophile role is filled by serine 174. Position 176 (asparagine 176) interacts with substrate. Residues lysine 216 and threonine 244 each coordinate FMN. Residue 245 to 246 (NT) coordinates substrate. Residues glycine 267, glycine 296, and 317 to 318 (YS) each bind FMN.

Belongs to the dihydroorotate dehydrogenase family. Type 2 subfamily. Monomer. It depends on FMN as a cofactor.

Its subcellular location is the cell membrane. It catalyses the reaction (S)-dihydroorotate + a quinone = orotate + a quinol. It functions in the pathway pyrimidine metabolism; UMP biosynthesis via de novo pathway; orotate from (S)-dihydroorotate (quinone route): step 1/1. Catalyzes the conversion of dihydroorotate to orotate with quinone as electron acceptor. The protein is Dihydroorotate dehydrogenase (quinone) of Cellvibrio japonicus (strain Ueda107) (Pseudomonas fluorescens subsp. cellulosa).